We begin with the raw amino-acid sequence, 499 residues long: Apolipoprotein N-acyltransferase (499 aa).

6 helical membrane-spanning segments follow: residues 17–37, 38–58, 84–104, 131–151, 163–183, and 198–218; these read VLAG…ALAL, LWSA…AVLL, ASIW…WAWL, IWGL…GVGG, LARW…GWWL, and RSLL…WSLL. The region spanning 232 to 458 is the CN hydrolase domain; the sequence is WQPAIPTRSK…EGVGLADLHF (227 aa). Glutamate 273 acts as the Proton acceptor in catalysis. Residue lysine 322 is part of the active site. The Nucleophile role is filled by cysteine 370. Residues 474-494 form a helical membrane-spanning segment; that stretch reads IGLMLFAVVGLGLSRVRSWLI.

This sequence belongs to the CN hydrolase family. Apolipoprotein N-acyltransferase subfamily.

It localises to the cell inner membrane. It carries out the reaction N-terminal S-1,2-diacyl-sn-glyceryl-L-cysteinyl-[lipoprotein] + a glycerophospholipid = N-acyl-S-1,2-diacyl-sn-glyceryl-L-cysteinyl-[lipoprotein] + a 2-acyl-sn-glycero-3-phospholipid + H(+). It participates in protein modification; lipoprotein biosynthesis (N-acyl transfer). In terms of biological role, catalyzes the phospholipid dependent N-acylation of the N-terminal cysteine of apolipoprotein, the last step in lipoprotein maturation. This Prochlorococcus marinus (strain MIT 9313) protein is Apolipoprotein N-acyltransferase.